A 1384-amino-acid polypeptide reads, in one-letter code: DNA-directed RNA polymerase subunit beta' (1384 aa).

C81, C83, C96, and C99 together coordinate Zn(2+). Mg(2+) is bound by residues D472, D474, and D476.

The protein belongs to the RNA polymerase beta' chain family. The RNAP catalytic core consists of 2 alpha, 1 beta, 1 beta' and 1 omega subunit. When a sigma factor is associated with the core the holoenzyme is formed, which can initiate transcription. Mg(2+) is required as a cofactor. It depends on Zn(2+) as a cofactor.

It catalyses the reaction RNA(n) + a ribonucleoside 5'-triphosphate = RNA(n+1) + diphosphate. Its function is as follows. DNA-dependent RNA polymerase catalyzes the transcription of DNA into RNA using the four ribonucleoside triphosphates as substrates. This Opitutus terrae (strain DSM 11246 / JCM 15787 / PB90-1) protein is DNA-directed RNA polymerase subunit beta'.